Consider the following 62-residue polypeptide: Sperm protamine P1 (62 aa).

Residues 1–62 form a disordered region; it reads MARYRRHSRS…RYSRRGRRRY (62 aa).

This sequence belongs to the protamine P1 family. As to expression, testis.

It is found in the nucleus. It localises to the chromosome. Protamines substitute for histones in the chromatin of sperm during the haploid phase of spermatogenesis. They compact sperm DNA into a highly condensed, stable and inactive complex. The protein is Sperm protamine P1 (PRM1) of Antechinomys laniger (Eastern jerboa marsupial).